A 246-amino-acid polypeptide reads, in one-letter code: MKISDVRSKAFAMPLTSPAFPMGPYRFVDREFLIITYRTDPDRLREIVPEPLKVTEPLVHYEFIRMADSTGFGDYTESGQVIPVEYNGQPGGYTLAMYLDDHPPIAGGRELWGFPKKLASPTLHVNTDHILGTLDYGKVRVATGTMGYKHKELDIVEQAKRLAGPNFLLKIIPHVDGTARVCELVRYYMQDIVMKGAWTGPASLELSPHALAPVADLPVLEIVEARHLVADLTLGLGEVVYDYLAQ.

The Schiff-base intermediate with acetoacetate role is filled by K116.

This sequence belongs to the ADC family.

The catalysed reaction is acetoacetate + H(+) = acetone + CO2. Its function is as follows. Catalyzes the conversion of acetoacetate to acetone and carbon dioxide. The sequence is that of Acetoacetate decarboxylase from Burkholderia multivorans (strain ATCC 17616 / 249).